Reading from the N-terminus, the 807-residue chain is Putative AC transposase (807 aa).

Disordered regions lie at residues 42 to 140 (GLKR…KKCT) and 785 to 807 (MDEDEDAIEFSKNNEDVASGSSP). Polar residues predominate over residues 84 to 98 (QSVSSSNANGTATDP). A run of 10 repeats spans residues 109-110 (PQ), 111-112 (PQ), 113-114 (PQ), 115-116 (PQ), 117-118 (PE), 119-120 (PQ), 121-122 (PQ), 123-124 (PQ), 125-126 (PE), and 127-128 (PE). The 10 X 2 AA tandem repeats of P-[QE] stretch occupies residues 109–128 (PQPQPQPQPEPQPQPQPEPE). The span at 110-125 (QPQPQPQPEPQPQPQP) shows a compositional bias: pro residues.

This Zea mays (Maize) protein is Putative AC transposase.